Consider the following 458-residue polypeptide: MSSGRIVQIIGAVIDVEFPRDSVPSIYNALKVQGAETTLEVQQQLGDGVVRTIAMGSTEGLKRGLDVVDTGAAISVPVGKATLGRIMDVLGNPIDEAGPIDTEERWGIHRPAPSFAEQAGGNDLLETGIKVIDLVCPFAKGGKVGLFGGAGVGKTVNMMELIRNIAIEHSGYSVFAGVGERTREGNDFYHEMKDSNVLDKVALVYGQMNEPPGNRLRVALTGLTMAEKFRDEGNDVLLFVDNIYRYTLAGTEVSALLGRMPSAVGYQPTLAEEMGVLQERITSTKEGSITSIQAVYVPADDLTDPSPATTFAHLDATVVLSRDIASLGIYPAVDPLDSTSRQLDPNVIGQEHYDTARGVQYVLQRYKELKDIIAILGMDELSETDKQLVSRARKIQRFLSQPFFVAEVFTGASGKYVSLKDTIAGFKGILNGDYDHLPEQAFYMVGGIEEAIEKAKKL.

148 to 155 (GGAGVGKT) serves as a coordination point for ATP.

Belongs to the ATPase alpha/beta chains family. As to quaternary structure, F-type ATPases have 2 components, CF(1) - the catalytic core - and CF(0) - the membrane proton channel. CF(1) has five subunits: alpha(3), beta(3), gamma(1), delta(1), epsilon(1). CF(0) has three main subunits: a(1), b(2) and c(9-12). The alpha and beta chains form an alternating ring which encloses part of the gamma chain. CF(1) is attached to CF(0) by a central stalk formed by the gamma and epsilon chains, while a peripheral stalk is formed by the delta and b chains.

It is found in the cell inner membrane. It carries out the reaction ATP + H2O + 4 H(+)(in) = ADP + phosphate + 5 H(+)(out). In terms of biological role, produces ATP from ADP in the presence of a proton gradient across the membrane. The catalytic sites are hosted primarily by the beta subunits. This Pseudomonas fluorescens (strain SBW25) protein is ATP synthase subunit beta.